An 83-amino-acid chain; its full sequence is Probable insulin-like peptide alpha-type 2 (83 aa).

The signal sequence occupies residues 1–21 (MHTTTILICFFIFLVQVSTMD). Intrachain disulfides connect cysteine 32-cysteine 66, cysteine 44-cysteine 79, and cysteine 54-cysteine 80.

This sequence belongs to the insulin family.

It localises to the secreted. The sequence is that of Probable insulin-like peptide alpha-type 2 (ins-22) from Caenorhabditis elegans.